Consider the following 236-residue polypeptide: Biosynthetic peptidoglycan transglycosylase (236 aa).

The helical transmembrane segment at 20 to 40 threads the bilayer; it reads GLVVAAVLALIPTMLTFLYLP.

This sequence belongs to the glycosyltransferase 51 family.

The protein resides in the cell inner membrane. It carries out the reaction [GlcNAc-(1-&gt;4)-Mur2Ac(oyl-L-Ala-gamma-D-Glu-L-Lys-D-Ala-D-Ala)](n)-di-trans,octa-cis-undecaprenyl diphosphate + beta-D-GlcNAc-(1-&gt;4)-Mur2Ac(oyl-L-Ala-gamma-D-Glu-L-Lys-D-Ala-D-Ala)-di-trans,octa-cis-undecaprenyl diphosphate = [GlcNAc-(1-&gt;4)-Mur2Ac(oyl-L-Ala-gamma-D-Glu-L-Lys-D-Ala-D-Ala)](n+1)-di-trans,octa-cis-undecaprenyl diphosphate + di-trans,octa-cis-undecaprenyl diphosphate + H(+). It participates in cell wall biogenesis; peptidoglycan biosynthesis. Its function is as follows. Peptidoglycan polymerase that catalyzes glycan chain elongation from lipid-linked precursors. The sequence is that of Biosynthetic peptidoglycan transglycosylase from Mesorhizobium japonicum (strain LMG 29417 / CECT 9101 / MAFF 303099) (Mesorhizobium loti (strain MAFF 303099)).